Consider the following 309-residue polypeptide: L-aminoadipate-semialdehyde dehydrogenase-phosphopantetheinyl transferase (309 aa).

Residues Arg-47, 86–91, and 108–111 each bind CoA; these read RTAKGK and NISH. Residues Asp-129 and Glu-181 each coordinate Mg(2+). 181–185 provides a ligand contact to CoA; sequence ESFIK. Ser-258 is modified (phosphoserine).

The protein belongs to the P-Pant transferase superfamily. AcpS family. Monomer. The cofactor is Mg(2+). In terms of tissue distribution, detected in heart, skeletal muscle, placenta, testis, brain, pancreas, liver and kidney.

It is found in the cytoplasm. It localises to the cytosol. It catalyses the reaction apo-[ACP] + CoA = holo-[ACP] + adenosine 3',5'-bisphosphate + H(+). The enzyme catalyses apo-[ACP] + acetyl-CoA = acetyl-[ACP] + adenosine 3',5'-bisphosphate + H(+). Catalyzes the post-translational modification of target proteins by phosphopantetheine. Can transfer the 4'-phosphopantetheine moiety from coenzyme A, regardless of whether the CoA is presented in the free thiol form or as an acetyl thioester, to a serine residue of a broad range of acceptors including the acyl carrier domain of FASN. This Homo sapiens (Human) protein is L-aminoadipate-semialdehyde dehydrogenase-phosphopantetheinyl transferase (AASDHPPT).